The primary structure comprises 430 residues: MDAELPHSMIGSYLNPPERMYLPSFSQTEASQNCHPGSSPKMFNSPNNQALVSALKTLQEKIRRLELERTQAEDNLNLLSREAAQYKKALEEETNERNLAHEELTRQKKDISIQLSSAQSRCILLEKQLEYTKRMVLNVEREKNMILEQQAQLQREKEQDQMKLHAKLEKLDVLEKECLRLTTTQQTAEEKIKYLEEKLKEEEHQRRLFQDRACELQTGLEISKILMSTVSSSKLCNERKKLPKKTNCLKREPPQHTDCRFRGPASERERPPFRMTSSARAEPHSSGEPFSICDNLSELLRTMQDELDQMNMEHRELLRQIAQTGSHSDSEELEQELEHLARKMESKEDQISKLQKHQDRVRKLQEKVENSRINESSGIHGNPKRSKNLKTSPRKCLSETSAFQKDRSFQPVKVHSLPPRLRRDDVKWEQ.

A Phosphoserine modification is found at S45. Positions 46 to 213 form a coiled coil; that stretch reads PNNQALVSAL…HQRRLFQDRA (168 aa). 2 disordered regions span residues 248–290 and 362–430; these read CLKR…GEPF and RKLQ…KWEQ. Composition is skewed to basic and acidic residues over residues 249–272, 362–372, and 421–430; these read LKRE…ERPP, RKLQEKVENSR, and LRRDDVKWEQ. Residues 290–377 adopt a coiled-coil conformation; it reads FSICDNLSEL…VENSRINESS (88 aa).

The protein belongs to the translokin family.

The protein resides in the cytoplasm. It localises to the cytoskeleton. The protein localises to the microtubule organizing center. Its subcellular location is the centrosome. Centrosomal protein which may be required for microtubule attachment to centrosomes. The protein is Centrosomal protein CEP57L1 (Cep57l1) of Rattus norvegicus (Rat).